We begin with the raw amino-acid sequence, 533 residues long: Homeobox protein DTH-1 (533 aa).

Disordered stretches follow at residues 1 to 28 (MSSNGDSVKYDTNFDREGYSTDSSNECP) and 308 to 378 (LPQN…GKKR). Residues 8–19 (VKYDTNFDREGY) are compositionally biased toward basic and acidic residues. Over residues 308-317 (LPQNLPNPNQ) the composition is skewed to low complexity. Positions 318-333 (TDSIYSSSINENNQPI) are enriched in polar residues. Low complexity predominate over residues 360-371 (SVENNDNENSSS). The segment at residues 377–436 (KRKRRVLFSKKQILELERHFRQKKYLSAPEREHLANLIGLSPTQVKIWFQNHRYKMKRAH) is a DNA-binding region (homeobox).

It belongs to the NK-2 homeobox family. As to expression, intestine and unidentified peripheral parenchymal cells. Slightly higher levels in the cephalic region compared to other body regions.

Its subcellular location is the nucleus. Its function is as follows. This protein might be involved in determination and/or differentiation of nerve cells in the continuous replacement of neurons in the cephalic region. The polypeptide is Homeobox protein DTH-1 (DTH-1) (Girardia tigrina (Planarian)).